A 151-amino-acid chain; its full sequence is Myosin light polypeptide 6 (151 aa).

C2 is subject to N-acetylcysteine. Residues 7-42 (DQTAEFKEAFQLFDRTGDGKILYSQCGDVMRALGQN) enclose the EF-hand 1 domain. S57 carries the phosphoserine modification. At K81 the chain carries N6-acetyllysine. EF-hand domains are found at residues 84 to 119 (GTYE…LGEK) and 119 to 151 (KMTE…VLNG).

Myosin is a hexamer of 2 heavy chains and 4 light chains. Interacts with SPATA6.

Regulatory light chain of myosin. Does not bind calcium. This is Myosin light polypeptide 6 (Myl6) from Rattus norvegicus (Rat).